A 569-amino-acid polypeptide reads, in one-letter code: F-box-like/WD repeat-containing protein TBL1X (569 aa).

A LisH domain is found at 55-87; it reads TSDEVNFLVYRYLQESGFSHSAFTFGIESHISQ. The region spanning 92–137 is the F-box-like domain; sequence GTLVPPAALISILQKGLQYVEAEISINEDGTVFDGRPIESLSLIDA. The residue at position 153 (lysine 153) is an N6-acetyllysine. The segment at 170–195 is disordered; the sequence is TSASVSQQNPSKNREATVNGEENRAH. Position 175 is a phosphoserine (serine 175). WD repeat units lie at residues 222-261, 278-317, 319-358, 361-401, 402-441, 444-492, 495-534, and 536-568; these read GHESEVFICAWNPVSDLLASGSGDSTARIWNLNENSNGGS, PSNKDVTSLDWNTNGTLLATGSYDGFARIWTEDGNLASTL, QHKGPIFALKWNRKGNYILSAGVDKTTIIWDAHTGEAKQQ, FHSA…KTFQ, GHTNEVNAIKWDPSGMLLASCSDDMTLKIWSMKQEVCIHD, AHNK…CTHT, KHQEPVYSVAFSPDGRYLASGSFDKCVHIWNTQSGNLVHS, and RGTGGIFEVCWNARGDKVGASASDGSVCVLDLR. A Glycyl lysine isopeptide (Lys-Gly) (interchain with G-Cter in SUMO2) cross-link involves residue lysine 332.

This sequence belongs to the WD repeat EBI family. In terms of assembly, homotetramer; dimer of dimers. Component of the N-Cor repressor complex, at least composed of NCOR1, NCOR2, HDAC3, TBL1X, TBL1R, CORO2A and GPS2. Interacts with GPS2 (when sumoylated); leading to protect GPS2 against degradation by the proteasome. Component of a E3 ubiquitin ligase complex containing UBE2D1, SIAH1, CACYBP/SIP, SKP1, APC and TBL1X. Probably part of other corepressor complexes, that do not contain NCOR1 and NCOR2. Interacts with histones H2B, H3a and H4. Interacts with MECP2; recruits TBL1X to the heterochromatin foci. Interacts with USP44.

The protein localises to the nucleus. F-box-like protein involved in the recruitment of the ubiquitin/19S proteasome complex to nuclear receptor-regulated transcription units. Plays an essential role in transcription activation mediated by nuclear receptors. Probably acts as integral component of corepressor complexes that mediates the recruitment of the 19S proteasome complex, leading to the subsequent proteasomal degradation of transcription repressor complexes, thereby allowing cofactor exchange. The sequence is that of F-box-like/WD repeat-containing protein TBL1X (TBL1X) from Macaca fascicularis (Crab-eating macaque).